Here is a 568-residue protein sequence, read N- to C-terminus: MPHAPARSGDAMSAAAPPCCTSLLGLSLSMFVAPCALAATPLEGAVVSAPAPTPPTPDLAYPELFQAVQRGELFDDQKHFVDFLPLRDPALINADYLAQHEHAGFDLRKFVDANFEESPPVQTDAIRQDTALREHIDALWPKLVRSQTNVPAHSSLLALPHPYVVPGGRFREVYYWDSYFTMLGLVKSGETTLSRQMLDNFAYLIDTYGHIPNGNRTYYLSRSQPPFFSYMVELQAGVEGEAVYQRYLPQLQKEYAYWMQGGDDLQPGQAARHVVRLADGSVLNRYWDERDTPRPEAWLHDTRTAAEAHDRPAADVYRDLRAGAESGWDYTSRWLADGKTLSTIRTTAIVPIDLNSLLYHLERTLAQACAHTGTACSQDYAALAQQRKQAIDAHLWNAAGYYADYDWQTRTLSNQVTAAALYPLFAGLASADHAKRTATSVRARLLRPGGLATTALKTGQQWDEPNGWAPLQWVAVDGLRRYGEDGLARTIGERFLTQVQALFAREHKLVEKYGLDADAAGGGGGEYALQDGFGWTNGVTLMLLNLYPSPGAIQAPAKTKRKPEPAAP.

Positions 1 to 38 (MPHAPARSGDAMSAAAPPCCTSLLGLSLSMFVAPCALA) are cleaved as a signal peptide. Residues R169, 176–177 (WD), N213, 222–224 (RSQ), 294–296 (RPE), and G327 contribute to the substrate site. Residues D329 and E511 each act as proton donor/acceptor in the active site. E526 serves as a coordination point for substrate.

The protein belongs to the glycosyl hydrolase 37 family.

It is found in the periplasm. It catalyses the reaction alpha,alpha-trehalose + H2O = alpha-D-glucose + beta-D-glucose. Functionally, provides the cells with the ability to utilize trehalose at high osmolarity by splitting it into glucose molecules that can subsequently be taken up by the phosphotransferase-mediated uptake system. This Xanthomonas campestris pv. campestris (strain B100) protein is Periplasmic trehalase.